Consider the following 110-residue polypeptide: Neural hemoglobin (110 aa).

The 109-residue stretch at 2-110 (VNWAAVVDDF…HAIDDILSHL (109 aa)) folds into the Globin domain. A heme-binding site is contributed by His70.

This sequence belongs to the globin family. In terms of assembly, homotetramer. Self-associates in the deoxy state. Seems to dissociate upon oxygenation.

Its function is as follows. Acts as an oxygen store capable of sustaining neuronal activity in an anoxic environment for 5 to 30 minutes. The chain is Neural hemoglobin from Cerebratulus lacteus (Milky ribbon worm).